Reading from the N-terminus, the 384-residue chain is Probable splicing factor YJU2B (384 aa).

Residues 1–28 (MGERKGTNKYYPPDFDPAKHGSLNGYRN) are disordered. Residues 183–212 (NSLLRSKFREEKKQIKEEEERDQALLTKAS) are a coiled coil. The tract at residues 275–331 (GIRTKTPSVPGISPVSLGVVRRTSKEENKAEDKSVESPDGSRSRKAEGMCRKEETGC) is disordered. Over residues 297-331 (TSKEENKAEDKSVESPDGSRSRKAEGMCRKEETGC) the composition is skewed to basic and acidic residues.

This sequence belongs to the CWC16 family.

The protein resides in the nucleus. Functionally, may be involved in mRNA splicing. The protein is Probable splicing factor YJU2B (yju2b) of Xenopus laevis (African clawed frog).